A 218-amino-acid chain; its full sequence is uncharacterized protein (218 aa).

In terms of domain architecture, ABC transporter spans 2-216 (IEVLNLTKKI…ETSEKVIYKK (215 aa)). An ATP-binding site is contributed by 34 to 41 (GSNGSGKT).

The protein belongs to the ABC transporter superfamily.

This is an uncharacterized protein from Bacillus subtilis (strain 168).